The sequence spans 610 residues: Methionine--tRNA ligase (610 aa).

The short motif at 12–22 (PYANGPRHIGH) is the 'HIGH' region element. The Zn(2+) site is built by cysteine 144, cysteine 147, cysteine 157, and cysteine 160. Positions 348–352 (KFSSS) match the 'KMSKS' region motif. ATP is bound at residue serine 351.

It belongs to the class-I aminoacyl-tRNA synthetase family. MetG type 1 subfamily. Monomer. Zn(2+) is required as a cofactor.

Its subcellular location is the cytoplasm. It catalyses the reaction tRNA(Met) + L-methionine + ATP = L-methionyl-tRNA(Met) + AMP + diphosphate. Its function is as follows. Is required not only for elongation of protein synthesis but also for the initiation of all mRNA translation through initiator tRNA(fMet) aminoacylation. The sequence is that of Methionine--tRNA ligase from Corynebacterium glutamicum (strain R).